Consider the following 213-residue polypeptide: Octanoyltransferase (213 aa).

A BPL/LPL catalytic domain is found at 32-207 (NSTLDEIWLV…NILALLNNPD (176 aa)). Substrate-binding positions include 71 to 78 (RGGQVTYH), 138 to 140 (SLG), and 151 to 153 (GLA). The Acyl-thioester intermediate role is filled by Cys169.

Belongs to the LipB family.

The protein localises to the cytoplasm. The enzyme catalyses octanoyl-[ACP] + L-lysyl-[protein] = N(6)-octanoyl-L-lysyl-[protein] + holo-[ACP] + H(+). It participates in protein modification; protein lipoylation via endogenous pathway; protein N(6)-(lipoyl)lysine from octanoyl-[acyl-carrier-protein]: step 1/2. In terms of biological role, catalyzes the transfer of endogenously produced octanoic acid from octanoyl-acyl-carrier-protein onto the lipoyl domains of lipoate-dependent enzymes. Lipoyl-ACP can also act as a substrate although octanoyl-ACP is likely to be the physiological substrate. This Shigella flexneri serotype 5b (strain 8401) protein is Octanoyltransferase.